Reading from the N-terminus, the 120-residue chain is Protein VraC (120 aa).

This Staphylococcus epidermidis (strain ATCC 12228 / FDA PCI 1200) protein is Protein VraC.